Reading from the N-terminus, the 98-residue chain is NADH-ubiquinone oxidoreductase chain 4L (98 aa).

Helical transmembrane passes span 1 to 21 (MSMV…GLLM), 29 to 49 (SLLC…VTIL), and 61 to 81 (IILL…LVMV).

The protein belongs to the complex I subunit 4L family. Core subunit of respiratory chain NADH dehydrogenase (Complex I) which is composed of 45 different subunits.

It localises to the mitochondrion inner membrane. It catalyses the reaction a ubiquinone + NADH + 5 H(+)(in) = a ubiquinol + NAD(+) + 4 H(+)(out). Core subunit of the mitochondrial membrane respiratory chain NADH dehydrogenase (Complex I) which catalyzes electron transfer from NADH through the respiratory chain, using ubiquinone as an electron acceptor. Part of the enzyme membrane arm which is embedded in the lipid bilayer and involved in proton translocation. This is NADH-ubiquinone oxidoreductase chain 4L (MT-ND4L) from Pusa hispida (Ringed seal).